A 625-amino-acid chain; its full sequence is Phosphomethylpyrimidine synthase (625 aa).

Residues N237, M266, Y295, H331, 351–353 (SRG), 392–395 (DGLR), and E431 contribute to the substrate site. H435 lines the Zn(2+) pocket. A substrate-binding site is contributed by Y458. H499 is a Zn(2+) binding site. 3 residues coordinate [4Fe-4S] cluster: C579, C582, and C587.

This sequence belongs to the ThiC family. As to quaternary structure, homodimer. Requires [4Fe-4S] cluster as cofactor.

The enzyme catalyses 5-amino-1-(5-phospho-beta-D-ribosyl)imidazole + S-adenosyl-L-methionine = 4-amino-2-methyl-5-(phosphooxymethyl)pyrimidine + CO + 5'-deoxyadenosine + formate + L-methionine + 3 H(+). The protein operates within cofactor biosynthesis; thiamine diphosphate biosynthesis. Functionally, catalyzes the synthesis of the hydroxymethylpyrimidine phosphate (HMP-P) moiety of thiamine from aminoimidazole ribotide (AIR) in a radical S-adenosyl-L-methionine (SAM)-dependent reaction. This is Phosphomethylpyrimidine synthase from Cupriavidus metallidurans (strain ATCC 43123 / DSM 2839 / NBRC 102507 / CH34) (Ralstonia metallidurans).